The following is a 595-amino-acid chain: Aspartate--tRNA(Asp/Asn) ligase (595 aa).

Glu-178 lines the L-aspartate pocket. The interval 202–205 is aspartate; it reads QLFK. Arg-224 contacts L-aspartate. ATP is bound by residues 224–226 and Gln-233; that span reads RDE. His-458 contacts L-aspartate. Glu-488 provides a ligand contact to ATP. Position 495 (Arg-495) interacts with L-aspartate. 540–543 lines the ATP pocket; that stretch reads GLDR.

It belongs to the class-II aminoacyl-tRNA synthetase family. Type 1 subfamily. As to quaternary structure, homodimer.

It localises to the cytoplasm. The catalysed reaction is tRNA(Asx) + L-aspartate + ATP = L-aspartyl-tRNA(Asx) + AMP + diphosphate. Its function is as follows. Aspartyl-tRNA synthetase with relaxed tRNA specificity since it is able to aspartylate not only its cognate tRNA(Asp) but also tRNA(Asn). Reaction proceeds in two steps: L-aspartate is first activated by ATP to form Asp-AMP and then transferred to the acceptor end of tRNA(Asp/Asn). The sequence is that of Aspartate--tRNA(Asp/Asn) ligase from Trichodesmium erythraeum (strain IMS101).